The chain runs to 396 residues: Protein PIN-LIKES 5 (396 aa).

Residues 1–5 (MGFWS) are Lumenal-facing. A helical transmembrane segment spans residues 6–26 (LLEVASMPVIQVLFMSLVGAF). The Cytoplasmic segment spans residues 27 to 45 (MASDRCKLFPVEARNSMNK). Residues 46–66 (VVFVLFAPALMFANLAQTVTL) form a helical membrane-spanning segment. The Lumenal portion of the chain corresponds to 67 to 73 (EDIISWW). Residues 74-94 (FMPVNMGLTFLIGGLLGWLVV) form a helical membrane-spanning segment. Over 95–106 (KILKPPPYLEGL) the chain is Cytoplasmic. A helical transmembrane segment spans residues 107–127 (IVATCSAGNMGNLPIILVPAI). The Lumenal portion of the chain corresponds to 128–144 (CDEDKSPFGNRSVCRTV). Residues 145 to 165 (GLSYASFSMALGGFYIWTYTF) traverse the membrane as a helical segment. Topologically, residues 166–229 (RLIKGSAMKV…WRKGVDFLHE (64 aa)) are cytoplasmic. A helical transmembrane segment spans residues 230 to 250 (ILEELLAPPTLGAIIGFIFGA). Residues 251-273 (VRWLRNLIIGDDAPLRIVQSTAK) lie on the Lumenal side of the membrane. The helical transmembrane segment at 274–294 (LLGDGTIPCMTIILGGNLIQG) threads the bilayer. Residues 295–312 (LRSSAVKPMVVLGIVCVR) lie on the Cytoplasmic side of the membrane. The chain crosses the membrane as a helical span at residues 313–333 (YIAMPIIGIGIVLTAANLGFL). The Lumenal segment spans residues 334-337 (PADP). A helical membrane pass occupies residues 338 to 358 (LFQYVLMLQFTLPPAMNIGTM). Residues 359-370 (TQLYNVAQDECS) are Cytoplasmic-facing. The helical transmembrane segment at 371 to 391 (VLMLWTYLVAILALTVWSTIF) threads the bilayer. Residues 392–396 (LHLLV) lie on the Lumenal side of the membrane.

It belongs to the auxin efflux carrier (TC 2.A.69.2) family. As to expression, expressed in seedlings, cauline leaves and flowers.

The protein localises to the endoplasmic reticulum membrane. In terms of biological role, involved in cellular auxin homeostasis by regulating auxin metabolism. Regulates intracellular auxin accumulation at the endoplasmic reticulum and thus auxin availability for nuclear auxin signaling. The polypeptide is Protein PIN-LIKES 5 (Arabidopsis thaliana (Mouse-ear cress)).